The sequence spans 764 residues: Reticulon-1 (764 aa).

4 disordered regions span residues 1–37 (MAANPEVFSGRLEGNVAAARRPGSAQEEEGEAAGGAL), 115–147 (PDIKEFSGVGPRSPKEIPTFDSRGLLSSDSGIE), 247–400 (LYNS…SEIE), and 455–475 (ESCDGSSASEESPKRDQDSPM). Residues 261–282 (VTISFTGMETTLQTEYPENQQG) are compositionally biased toward polar residues. A compositionally biased stretch (basic and acidic residues) spans 328–337 (EEQRKYKISE). Positions 578 to 764 (AIELLYWRDI…AKIPGTKQKE (187 aa)) constitute a Reticulon domain. The next 2 membrane-spanning stretches (helical) occupy residues 607–627 (FSVVSVIAYLALAALSATISF) and 696–716 (VLMWLLTYVGALFNGLTLLIM).

It localises to the endoplasmic reticulum membrane. It is found in the nucleus. Its function is as follows. Inhibits amyloid precursor protein processing, probably by blocking BACE1 activity. The polypeptide is Reticulon-1 (Xenopus tropicalis (Western clawed frog)).